Here is a 286-residue protein sequence, read N- to C-terminus: Bifunctional protein FolD (286 aa).

Residues 160 to 162 (GRS), serine 189, and threonine 230 each bind NADP(+).

It belongs to the tetrahydrofolate dehydrogenase/cyclohydrolase family. As to quaternary structure, homodimer.

The enzyme catalyses (6R)-5,10-methylene-5,6,7,8-tetrahydrofolate + NADP(+) = (6R)-5,10-methenyltetrahydrofolate + NADPH. It catalyses the reaction (6R)-5,10-methenyltetrahydrofolate + H2O = (6R)-10-formyltetrahydrofolate + H(+). Its pathway is one-carbon metabolism; tetrahydrofolate interconversion. Its function is as follows. Catalyzes the oxidation of 5,10-methylenetetrahydrofolate to 5,10-methenyltetrahydrofolate and then the hydrolysis of 5,10-methenyltetrahydrofolate to 10-formyltetrahydrofolate. The protein is Bifunctional protein FolD of Chlamydia pneumoniae (Chlamydophila pneumoniae).